The following is a 442-amino-acid chain: Trigger factor (442 aa).

One can recognise a PPIase FKBP-type domain in the interval 165–250 (DDRVIIDFEG…LQKVMAPELP (86 aa)).

It belongs to the FKBP-type PPIase family. Tig subfamily.

The protein resides in the cytoplasm. It carries out the reaction [protein]-peptidylproline (omega=180) = [protein]-peptidylproline (omega=0). Its function is as follows. Involved in protein export. Acts as a chaperone by maintaining the newly synthesized protein in an open conformation. Functions as a peptidyl-prolyl cis-trans isomerase. In Coxiella burnetii (strain CbuG_Q212) (Coxiella burnetii (strain Q212)), this protein is Trigger factor.